The sequence spans 455 residues: Nuclear distribution protein nudF (455 aa).

A LisH domain is found at glutamine 9–glutamate 41. A coiled-coil region spans residues threonine 61–threonine 88. 8 WD repeats span residues serine 113–lysine 154, histidine 156–arginine 196, glycine 200–threonine 239, glycine 242–histidine 281, glycine 287–leucine 347, glycine 349–lysine 388, alanine 392–arginine 438, and valine 440–glycine 455. The interval lysine 408 to asparagine 431 is disordered.

This sequence belongs to the WD repeat LIS1/nudF family. Self-associates. Interacts with nudE and dynein.

It localises to the cytoplasm. The protein resides in the cytoskeleton. The protein localises to the spindle pole. Its function is as follows. Positively regulates the activity of the minus-end directed microtubule motor protein dynein. May enhance dynein-mediated microtubule sliding by targeting dynein to the microtubule plus end. Required for nuclear migration during vegetative growth as well as development. Required for retrograde early endosome (EE) transport from the hyphal tip. Required for localization of dynein to the mitotic spindle poles. Recruits additional proteins to the dynein complex at SPBs. The polypeptide is Nuclear distribution protein nudF (Aspergillus flavus (strain ATCC 200026 / FGSC A1120 / IAM 13836 / NRRL 3357 / JCM 12722 / SRRC 167)).